Reading from the N-terminus, the 362-residue chain is Mitochondrial distribution and morphology protein 12 (362 aa).

The 361-residue stretch at 1–361 folds into the SMP-LTD domain; the sequence is MSFDINWSQL…WPSWLCFDMS (361 aa). 2 disordered regions span residues 65–141 and 170–207; these read DFYE…AATP and TPSG…SKRG. Polar residues-rich tracts occupy residues 106–119 and 170–187; these read VTLS…TQFA and TPSG…MRTG. Over residues 192–201 the composition is skewed to low complexity; sequence PISNTPISSS.

This sequence belongs to the MDM12 family. As to quaternary structure, component of the ER-mitochondria encounter structure (ERMES) or MDM complex, composed of MMM1, MDM10, MDM12 and MDM34. An MMM1 homodimer associates with one molecule of MDM12 on each side in a pairwise head-to-tail manner, and the SMP-LTD domains of MMM1 and MDM12 generate a continuous hydrophobic tunnel for phospholipid trafficking.

Its subcellular location is the mitochondrion outer membrane. The protein resides in the endoplasmic reticulum membrane. In terms of biological role, component of the ERMES/MDM complex, which serves as a molecular tether to connect the endoplasmic reticulum (ER) and mitochondria. Components of this complex are involved in the control of mitochondrial shape and protein biogenesis, and function in nonvesicular lipid trafficking between the ER and mitochondria. MDM12 is required for the interaction of the ER-resident membrane protein MMM1 and the outer mitochondrial membrane-resident beta-barrel protein MDM10. The MDM12-MMM1 subcomplex functions in the major beta-barrel assembly pathway that is responsible for biogenesis of all mitochondrial outer membrane beta-barrel proteins, and acts in a late step after the SAM complex. The MDM10-MDM12-MMM1 subcomplex further acts in the TOM40-specific pathway after the action of the MDM12-MMM1 complex. Essential for establishing and maintaining the structure of mitochondria and maintenance of mtDNA nucleoids. This chain is Mitochondrial distribution and morphology protein 12, found in Meyerozyma guilliermondii (strain ATCC 6260 / CBS 566 / DSM 6381 / JCM 1539 / NBRC 10279 / NRRL Y-324) (Yeast).